The primary structure comprises 202 residues: ATP-dependent Clp protease proteolytic subunit (202 aa).

The active-site Nucleophile is serine 101. The active site involves histidine 126.

This sequence belongs to the peptidase S14 family. As to quaternary structure, component of the chloroplastic Clp protease core complex.

It is found in the plastid. The protein localises to the chloroplast stroma. The enzyme catalyses Hydrolysis of proteins to small peptides in the presence of ATP and magnesium. alpha-casein is the usual test substrate. In the absence of ATP, only oligopeptides shorter than five residues are hydrolyzed (such as succinyl-Leu-Tyr-|-NHMec, and Leu-Tyr-Leu-|-Tyr-Trp, in which cleavage of the -Tyr-|-Leu- and -Tyr-|-Trp bonds also occurs).. Cleaves peptides in various proteins in a process that requires ATP hydrolysis. Has a chymotrypsin-like activity. Plays a major role in the degradation of misfolded proteins. This is ATP-dependent Clp protease proteolytic subunit from Platanus occidentalis (Sycamore).